The chain runs to 246 residues: 1-(5-phosphoribosyl)-5-[(5-phosphoribosylamino)methylideneamino] imidazole-4-carboxamide isomerase (246 aa).

The Proton acceptor role is filled by Asp8. The Proton donor role is filled by Asp130.

It belongs to the HisA/HisF family.

It localises to the cytoplasm. It catalyses the reaction 1-(5-phospho-beta-D-ribosyl)-5-[(5-phospho-beta-D-ribosylamino)methylideneamino]imidazole-4-carboxamide = 5-[(5-phospho-1-deoxy-D-ribulos-1-ylimino)methylamino]-1-(5-phospho-beta-D-ribosyl)imidazole-4-carboxamide. The protein operates within amino-acid biosynthesis; L-histidine biosynthesis; L-histidine from 5-phospho-alpha-D-ribose 1-diphosphate: step 4/9. This chain is 1-(5-phosphoribosyl)-5-[(5-phosphoribosylamino)methylideneamino] imidazole-4-carboxamide isomerase, found in Shigella sonnei (strain Ss046).